The following is a 418-amino-acid chain: Vacuole membrane protein HFL1 (418 aa).

Topologically, residues 1 to 5 (MENKL) are extracellular. The helical transmembrane segment at 6–26 (LCWWLYWPCVYSSIIATIISF) threads the bilayer. Over 27–43 (YTITRHLLNYRKPYEQR) the chain is Cytoplasmic. The helical transmembrane segment at 44-64 (LSIRILLLVPIFSVSCASGII) threads the bilayer. At 65–78 (KPEAAQFYVDPIRE) the chain is on the extracellular side. The chain crosses the membrane as a helical span at residues 79 to 99 (FYEAFVIYTFFTFLTLLLGGE). The Cytoplasmic portion of the chain corresponds to 100 to 141 (RNIITVLSLNHAPTRHPIPLIGKICKPIDLSDPFDFLFVKKG). Residues 142 to 162 (ILQYVWFKPFYCFGTLICSAW) form a helical membrane-spanning segment. Residues 163-168 (KLPKFE) are Extracellular-facing. A helical membrane pass occupies residues 169–189 (IFLNVFYNISVTWSLYSLALF). The Cytoplasmic segment spans residues 190-205 (WKCLYPELTPYKPWLK). A helical membrane pass occupies residues 206–226 (FLCVKLIIFASYWQSIIIQGL). Over 227–246 (VVTGKLGTGNQDRTSGYVYK) the chain is Extracellular. Residues 247 to 267 (NGLLCIEMVPFAILHAVAFPW) traverse the membrane as a helical segment. At 268–418 (NKYTAFSIPY…DVQSRSSMAC (151 aa)) the chain is on the cytoplasmic side. Positions 379 to 402 (RTFPEDPNYPVVHDYTMGHRYSRS) are ATG8-interacting region.

The protein belongs to the TMEM184 family. Interacts with ATG8.

Its subcellular location is the vacuole membrane. Vacuole membrane protein that recruits ATG8 to facilitate the degradation of vacuolar integral membrane proteins during early-stationary vacuole turnover (EVT) when cells enter stationary phase. This chain is Vacuole membrane protein HFL1, found in Saccharomyces cerevisiae (strain ATCC 204508 / S288c) (Baker's yeast).